Consider the following 372-residue polypeptide: 3-dehydroquinate synthase (372 aa).

NAD(+) is bound by residues 116–120 (GVVGD), 140–141 (TT), K153, K162, and 180–183 (TLNT). Residues E195, H260, and H277 each contribute to the Zn(2+) site.

It belongs to the sugar phosphate cyclases superfamily. Dehydroquinate synthase family. Co(2+) serves as cofactor. It depends on Zn(2+) as a cofactor. The cofactor is NAD(+).

Its subcellular location is the cytoplasm. It catalyses the reaction 7-phospho-2-dehydro-3-deoxy-D-arabino-heptonate = 3-dehydroquinate + phosphate. It functions in the pathway metabolic intermediate biosynthesis; chorismate biosynthesis; chorismate from D-erythrose 4-phosphate and phosphoenolpyruvate: step 2/7. Catalyzes the conversion of 3-deoxy-D-arabino-heptulosonate 7-phosphate (DAHP) to dehydroquinate (DHQ). This chain is 3-dehydroquinate synthase, found in Prochlorococcus marinus (strain MIT 9303).